The chain runs to 182 residues: Large ribosomal subunit protein uL16 (182 aa).

Positions glutamate 140–serine 182 are disordered. Over residues threonine 162–serine 176 the composition is skewed to low complexity.

This sequence belongs to the universal ribosomal protein uL16 family. Part of the 50S ribosomal subunit.

Binds 23S rRNA and is also seen to make contacts with the A and possibly P site tRNAs. The sequence is that of Large ribosomal subunit protein uL16 from Prochlorococcus marinus (strain SARG / CCMP1375 / SS120).